A 413-amino-acid polypeptide reads, in one-letter code: Hemocyanin type 2 unit e (413 aa).

The N-linked (GlcNAc...) (high mannose) asparagine glycan is linked to Asn17. Residue His49 coordinates Cu cation. An intrachain disulfide couples Cys55 to Cys66. The segment at residues 67-69 (CVH) is a cross-link (2'-(S-cysteinyl)-histidine (Cys-His)). Cu cation contacts are provided by His69 and His78. An N-linked (GlcNAc...) (high mannose) asparagine glycan is attached at Asn127. Cystine bridges form between Cys179/Cys246 and Cys336/Cys342. Cu cation contacts are provided by His189, His193, and His220.

It belongs to the tyrosinase family. Hemocyanin subfamily. Decamers of large identical subunits, each containing 8 globular oxygen-binding functional units. It depends on Cu(2+) as a cofactor. As to expression, hemolymph.

It localises to the secreted. Its subcellular location is the extracellular space. Functionally, hemocyanins are copper-containing oxygen carriers occurring freely dissolved in the hemolymph of many mollusks and arthropods. The sequence is that of Hemocyanin type 2 unit e from Rapana venosa (Veined rapa whelk).